Consider the following 298-residue polypeptide: N-acetylmuramic acid 6-phosphate etherase (298 aa).

The SIS domain occupies 55 to 218 (IHAQVSGGGR…STGLMIKSGK (164 aa)). Glu83 acts as the Proton donor in catalysis. Glu114 is an active-site residue.

Belongs to the GCKR-like family. MurNAc-6-P etherase subfamily. Homodimer.

The catalysed reaction is N-acetyl-D-muramate 6-phosphate + H2O = N-acetyl-D-glucosamine 6-phosphate + (R)-lactate. The protein operates within amino-sugar metabolism; 1,6-anhydro-N-acetylmuramate degradation. It participates in amino-sugar metabolism; N-acetylmuramate degradation. It functions in the pathway cell wall biogenesis; peptidoglycan recycling. Functionally, specifically catalyzes the cleavage of the D-lactyl ether substituent of MurNAc 6-phosphate, producing GlcNAc 6-phosphate and D-lactate. Together with AnmK, is also required for the utilization of anhydro-N-acetylmuramic acid (anhMurNAc) either imported from the medium or derived from its own cell wall murein, and thus plays a role in cell wall recycling. This Shigella sonnei (strain Ss046) protein is N-acetylmuramic acid 6-phosphate etherase.